A 327-amino-acid polypeptide reads, in one-letter code: Serine/threonine-protein phosphatase alpha-1 isoform (327 aa).

The Mn(2+) site is built by D62, H64, D90, and N122. H123 functions as the Proton donor in the catalytic mechanism. Residues H171 and H246 each contribute to the Mn(2+) site. Positions 308-327 (GSSGRPLTPPRGANNKNKKK) are disordered. At T315 the chain carries Phosphothreonine.

Belongs to the PPP phosphatase family. PP-1 subfamily. As to quaternary structure, interacts with Nop17l. The cofactor is Mn(2+).

The enzyme catalyses O-phospho-L-seryl-[protein] + H2O = L-seryl-[protein] + phosphate. The catalysed reaction is O-phospho-L-threonyl-[protein] + H2O = L-threonyl-[protein] + phosphate. This chain is Serine/threonine-protein phosphatase alpha-1 isoform (Pp1alpha-96A), found in Drosophila melanogaster (Fruit fly).